The sequence spans 435 residues: MENIKIIPSELNGEINIPPSKSLAHRAIISAGLSEGVSNIENIIFSEDIKATIRGMKSLGIEIEDITNEYKKGSERSTLKVIGKEKLTLENDTIDCSESGSTLRFLIPIALRAEKEVTFTGRGKLVSRPLDVYYNIFENQGIKYKTSNNELPLTVDGKINPGEFHVKGNVSSQFITGLMYTLPFLDGDSKIIITTELESKGYVDLTIDTLKKFGVEIENNNYKEFIIKGNQKSTSRDYRVQGDFSQGAFFIVAGILGSNVKTLDLDIDSLQGDKAIIDIVKKMGANIKVGRDYIETKKSKTHGITIDASECPDLVPILAVLGAVSHGTTKIINAERLRIKECDRLKAMATELSKIGADIKELEDGLIIKGKYKLKGGVVDSWNDHRIAMAMAIASIKCTEPVIIQNSMAVNKSYPDFWKDFEKVGGIIDEWSMGK.

Lys21, Ser22, and Arg26 together coordinate 3-phosphoshikimate. Lys21 lines the phosphoenolpyruvate pocket. Residues Gly100 and Arg128 each coordinate phosphoenolpyruvate. Positions 171, 172, 173, 199, 313, and 340 each coordinate 3-phosphoshikimate. Gln173 contacts phosphoenolpyruvate. Asp313 (proton acceptor) is an active-site residue. The phosphoenolpyruvate site is built by Arg344, Arg386, and Lys412.

This sequence belongs to the EPSP synthase family. In terms of assembly, monomer.

The protein resides in the cytoplasm. The enzyme catalyses 3-phosphoshikimate + phosphoenolpyruvate = 5-O-(1-carboxyvinyl)-3-phosphoshikimate + phosphate. The protein operates within metabolic intermediate biosynthesis; chorismate biosynthesis; chorismate from D-erythrose 4-phosphate and phosphoenolpyruvate: step 6/7. In terms of biological role, catalyzes the transfer of the enolpyruvyl moiety of phosphoenolpyruvate (PEP) to the 5-hydroxyl of shikimate-3-phosphate (S3P) to produce enolpyruvyl shikimate-3-phosphate and inorganic phosphate. The protein is 3-phosphoshikimate 1-carboxyvinyltransferase of Clostridium novyi (strain NT).